The primary structure comprises 160 residues: 2-C-methyl-D-erythritol 2,4-cyclodiphosphate synthase (160 aa).

The a divalent metal cation site is built by Asp11 and His13. 4-CDP-2-C-methyl-D-erythritol 2-phosphate-binding positions include 11–13 and 37–38; these read DVH and HS. An a divalent metal cation-binding site is contributed by His45. 4-CDP-2-C-methyl-D-erythritol 2-phosphate-binding positions include 59-61 and Arg145; that span reads DIG.

Belongs to the IspF family. In terms of assembly, homotrimer. A divalent metal cation is required as a cofactor.

It catalyses the reaction 4-CDP-2-C-methyl-D-erythritol 2-phosphate = 2-C-methyl-D-erythritol 2,4-cyclic diphosphate + CMP. It participates in isoprenoid biosynthesis; isopentenyl diphosphate biosynthesis via DXP pathway; isopentenyl diphosphate from 1-deoxy-D-xylulose 5-phosphate: step 4/6. Involved in the biosynthesis of isopentenyl diphosphate (IPP) and dimethylallyl diphosphate (DMAPP), two major building blocks of isoprenoid compounds. Catalyzes the conversion of 4-diphosphocytidyl-2-C-methyl-D-erythritol 2-phosphate (CDP-ME2P) to 2-C-methyl-D-erythritol 2,4-cyclodiphosphate (ME-CPP) with a corresponding release of cytidine 5-monophosphate (CMP). This is 2-C-methyl-D-erythritol 2,4-cyclodiphosphate synthase from Neisseria meningitidis serogroup A / serotype 4A (strain DSM 15465 / Z2491).